The following is a 260-amino-acid chain: Global transcriptional regulator CodY (260 aa).

The tract at residues 1-159 (MPNLLQKTRK…SSTVVGIQLL (159 aa)) is GAF domain. The H-T-H motif DNA-binding region spans 207-226 (ASVIADRIGITRSVIVNALR).

This sequence belongs to the CodY family.

It localises to the cytoplasm. Its function is as follows. DNA-binding global transcriptional regulator which is involved in the adaptive response to starvation and acts by directly or indirectly controlling the expression of numerous genes in response to nutrient availability. During rapid exponential growth, CodY is highly active and represses genes whose products allow adaptation to nutrient depletion. The protein is Global transcriptional regulator CodY of Streptococcus equi subsp. zooepidemicus (strain MGCS10565).